Here is a 348-residue protein sequence, read N- to C-terminus: Protein RecA (348 aa).

65 to 72 provides a ligand contact to ATP; sequence GPESSGKT.

The protein belongs to the RecA family.

It is found in the cytoplasm. In terms of biological role, can catalyze the hydrolysis of ATP in the presence of single-stranded DNA, the ATP-dependent uptake of single-stranded DNA by duplex DNA, and the ATP-dependent hybridization of homologous single-stranded DNAs. It interacts with LexA causing its activation and leading to its autocatalytic cleavage. In Vibrio natriegens, this protein is Protein RecA.